A 506-amino-acid polypeptide reads, in one-letter code: UDP-N-acetylmuramoyl-L-alanyl-D-glutamate--2,6-diaminopimelate ligase (506 aa).

Residue serine 42 coordinates UDP-N-acetyl-alpha-D-muramoyl-L-alanyl-D-glutamate. 125-131 (GTSGKTT) is an ATP binding site. Residues 166–167 (TT), serine 193, and arginine 201 contribute to the UDP-N-acetyl-alpha-D-muramoyl-L-alanyl-D-glutamate site. The residue at position 233 (lysine 233) is an N6-carboxylysine. Meso-2,6-diaminopimelate-binding positions include arginine 395, 419–422 (DNPR), glycine 475, and glutamate 479. The Meso-diaminopimelate recognition motif signature appears at 419 to 422 (DNPR).

The protein belongs to the MurCDEF family. MurE subfamily. It depends on Mg(2+) as a cofactor. In terms of processing, carboxylation is probably crucial for Mg(2+) binding and, consequently, for the gamma-phosphate positioning of ATP.

It is found in the cytoplasm. The enzyme catalyses UDP-N-acetyl-alpha-D-muramoyl-L-alanyl-D-glutamate + meso-2,6-diaminopimelate + ATP = UDP-N-acetyl-alpha-D-muramoyl-L-alanyl-gamma-D-glutamyl-meso-2,6-diaminopimelate + ADP + phosphate + H(+). The protein operates within cell wall biogenesis; peptidoglycan biosynthesis. In terms of biological role, catalyzes the addition of meso-diaminopimelic acid to the nucleotide precursor UDP-N-acetylmuramoyl-L-alanyl-D-glutamate (UMAG) in the biosynthesis of bacterial cell-wall peptidoglycan. This chain is UDP-N-acetylmuramoyl-L-alanyl-D-glutamate--2,6-diaminopimelate ligase, found in Streptomyces avermitilis (strain ATCC 31267 / DSM 46492 / JCM 5070 / NBRC 14893 / NCIMB 12804 / NRRL 8165 / MA-4680).